The following is an 89-amino-acid chain: DNA-directed RNA polymerase subunit Rpo6 (89 aa).

It belongs to the archaeal Rpo6/eukaryotic RPB6 RNA polymerase subunit family. In terms of assembly, part of the 13-subunit RNA polymerase complex.

It is found in the cytoplasm. The catalysed reaction is RNA(n) + a ribonucleoside 5'-triphosphate = RNA(n+1) + diphosphate. DNA-dependent RNA polymerase (RNAP) catalyzes the transcription of DNA into RNA using the four ribonucleoside triphosphates as substrates. Its function is as follows. Reconstitution experiments show this subunit is required for basic activity. This is DNA-directed RNA polymerase subunit Rpo6 from Sulfolobus acidocaldarius (strain ATCC 33909 / DSM 639 / JCM 8929 / NBRC 15157 / NCIMB 11770).